Here is an 84-residue protein sequence, read N- to C-terminus: Toxin-like TcoNTxP1 (84 aa).

The signal sequence occupies residues 1–19 (MKRMILFTSCLLLIDIVVG). The LCN-type CS-alpha/beta domain occupies 21–82 (KEGYPADSKG…VWDSATNKCG (62 aa)). 4 cysteine pairs are disulfide-bonded: C31-C81, C35-C57, C43-C62, and C47-C64. Residue C81 is modified to Cysteine amide. A propeptide spanning residues 82 to 84 (GKK) is cleaved from the precursor.

In terms of tissue distribution, expressed by the venom gland.

It is found in the secreted. Functionally, this protein is not toxic. It induces an immune response similar to that induced by whole venom. Thus, polyclonal antibodies raised against this protein can neutralize the effects of the venom. This is Toxin-like TcoNTxP1 from Tityus costatus (Brazilian scorpion).